Here is a 182-residue protein sequence, read N- to C-terminus: uncharacterized protein (182 aa).

The protein belongs to the DNA 3' phosphatase family.

This is an uncharacterized protein from Autographa californica nuclear polyhedrosis virus (AcMNPV).